Here is a 117-residue protein sequence, read N- to C-terminus: Ribosome-binding factor A (117 aa).

Belongs to the RbfA family. As to quaternary structure, monomer. Binds 30S ribosomal subunits, but not 50S ribosomal subunits or 70S ribosomes.

The protein localises to the cytoplasm. One of several proteins that assist in the late maturation steps of the functional core of the 30S ribosomal subunit. Associates with free 30S ribosomal subunits (but not with 30S subunits that are part of 70S ribosomes or polysomes). Required for efficient processing of 16S rRNA. May interact with the 5'-terminal helix region of 16S rRNA. The polypeptide is Ribosome-binding factor A (Nitrosomonas eutropha (strain DSM 101675 / C91 / Nm57)).